The chain runs to 149 residues: D-aminoacyl-tRNA deacylase (149 aa).

The Gly-cisPro motif, important for rejection of L-amino acids signature appears at 137 to 138 (GP).

It belongs to the DTD family. As to quaternary structure, homodimer.

It is found in the cytoplasm. The enzyme catalyses glycyl-tRNA(Ala) + H2O = tRNA(Ala) + glycine + H(+). The catalysed reaction is a D-aminoacyl-tRNA + H2O = a tRNA + a D-alpha-amino acid + H(+). An aminoacyl-tRNA editing enzyme that deacylates mischarged D-aminoacyl-tRNAs. Also deacylates mischarged glycyl-tRNA(Ala), protecting cells against glycine mischarging by AlaRS. Acts via tRNA-based rather than protein-based catalysis; rejects L-amino acids rather than detecting D-amino acids in the active site. By recycling D-aminoacyl-tRNA to D-amino acids and free tRNA molecules, this enzyme counteracts the toxicity associated with the formation of D-aminoacyl-tRNA entities in vivo and helps enforce protein L-homochirality. The sequence is that of D-aminoacyl-tRNA deacylase from Halothermothrix orenii (strain H 168 / OCM 544 / DSM 9562).